Here is a 75-residue protein sequence, read N- to C-terminus: Small ribosomal subunit protein eS31 (75 aa).

Zn(2+) contacts are provided by Cys41, Cys44, Cys60, and Cys63. The segment at 41-63 adopts a C4-type zinc-finger fold; sequence CPRCGSIMAHHLKPNERWSCGKC.

It belongs to the eukaryotic ribosomal protein eS31 family. As to quaternary structure, part of the 30S ribosomal subunit. Zn(2+) is required as a cofactor.

The chain is Small ribosomal subunit protein eS31 from Saccharolobus solfataricus (strain ATCC 35092 / DSM 1617 / JCM 11322 / P2) (Sulfolobus solfataricus).